Consider the following 1025-residue polypeptide: Multidrug resistance protein MdtC (1025 aa).

Transmembrane regions (helical) follow at residues 3–23, 333–353, 360–380, 387–407, 431–451, 463–483, 528–548, 853–873, 875–895, 897–917, 953–973, and 984–1004; these read FFAL…AITL, EVEQ…FLFL, IIPA…MYLC, LSLM…IVVL, VGFT…PLLL, FAVT…TLTP, LVGA…ISIP, VILI…LYES, VHPL…LLAL, LFNA…IGIV, PIMM…LSGG, and ITIV…TPVV.

This sequence belongs to the resistance-nodulation-cell division (RND) (TC 2.A.6) family. MdtC subfamily. As to quaternary structure, part of a tripartite efflux system composed of MdtA, MdtB and MdtC. MdtC forms a heteromultimer with MdtB.

It localises to the cell inner membrane. Functionally, the MdtABC tripartite complex confers resistance against novobiocin and deoxycholate. The chain is Multidrug resistance protein MdtC from Escherichia coli O81 (strain ED1a).